Reading from the N-terminus, the 80-residue chain is Large ribosomal subunit protein bL31B (80 aa).

Belongs to the bacterial ribosomal protein bL31 family. Type B subfamily. As to quaternary structure, part of the 50S ribosomal subunit.

This is Large ribosomal subunit protein bL31B from Streptococcus pneumoniae serotype 2 (strain D39 / NCTC 7466).